Consider the following 318-residue polypeptide: NADH-ubiquinone oxidoreductase chain 1 (318 aa).

Transmembrane regions (helical) follow at residues Pro-2–Leu-22, Ile-69–Leu-89, Leu-100–Gly-120, Leu-146–Ile-166, His-171–Ala-191, Leu-222–Phe-242, Glu-253–Ile-273, and Leu-294–Ile-314.

Belongs to the complex I subunit 1 family. As to quaternary structure, core subunit of respiratory chain NADH dehydrogenase (Complex I) which is composed of 45 different subunits.

The protein localises to the mitochondrion inner membrane. It carries out the reaction a ubiquinone + NADH + 5 H(+)(in) = a ubiquinol + NAD(+) + 4 H(+)(out). Core subunit of the mitochondrial membrane respiratory chain NADH dehydrogenase (Complex I) which catalyzes electron transfer from NADH through the respiratory chain, using ubiquinone as an electron acceptor. Essential for the catalytic activity and assembly of complex I. The sequence is that of NADH-ubiquinone oxidoreductase chain 1 (MT-ND1) from Pongo pygmaeus (Bornean orangutan).